A 122-amino-acid chain; its full sequence is Large ribosomal subunit protein uL18 (122 aa).

It belongs to the universal ribosomal protein uL18 family. Part of the 50S ribosomal subunit; part of the 5S rRNA/L5/L18/L25 subcomplex. Contacts the 5S and 23S rRNAs.

In terms of biological role, this is one of the proteins that bind and probably mediate the attachment of the 5S RNA into the large ribosomal subunit, where it forms part of the central protuberance. The chain is Large ribosomal subunit protein uL18 from Agathobacter rectalis (strain ATCC 33656 / DSM 3377 / JCM 17463 / KCTC 5835 / VPI 0990) (Eubacterium rectale).